The sequence spans 133 residues: C-C motif chemokine 21a (133 aa).

The signal sequence occupies residues Met1–Gly23. Intrachain disulfides connect Cys31-Cys57, Cys32-Cys75, and Cys103-Cys122. The segment at Leu86–Gly133 is disordered. The segment at Lys98 to Gly133 is C-terminal basic extension. The span at Arg104–Cys122 shows a compositional bias: basic residues.

Belongs to the intercrine beta (chemokine CC) family. Binds to CCR7 and to CXCR3. Interacts with PDPN; relocalizes PDPN to the basolateral membrane. Interacts with GPR174. As to expression, expressed strongly in lung, spleen, thymus, peripheral and mesentric lymph nodes. Also expressed in the testis, kidney, liver, and heart.

It localises to the secreted. Inhibits hemopoiesis and stimulates chemotaxis. Chemotactic in vitro for thymocytes and activated T-cells, but not for B-cells, macrophages, or neutrophils. Potent mesangial cell chemoattractant. Shows preferential activity towards naive T-cells. May play a role in mediating homing of lymphocytes to secondary lymphoid organs. In Mus musculus (Mouse), this protein is C-C motif chemokine 21a (Ccl21a).